The sequence spans 316 residues: DNA-directed RNA polymerase subunit alpha (316 aa).

The interval 1 to 233 (MCMSQFPIEF…HWFNPLQTLE (233 aa)) is alpha N-terminal domain (alpha-NTD). An alpha C-terminal domain (alpha-CTD) region spans residues 245-316 (MAQLSNMLIE…LHCQLKKYVD (72 aa)).

It belongs to the RNA polymerase alpha chain family. As to quaternary structure, in plastids the minimal PEP RNA polymerase catalytic core is composed of four subunits: alpha, beta, beta', and beta''. When a (nuclear-encoded) sigma factor is associated with the core the holoenzyme is formed, which can initiate transcription.

It localises to the plastid. It is found in the chloroplast. The enzyme catalyses RNA(n) + a ribonucleoside 5'-triphosphate = RNA(n+1) + diphosphate. Functionally, DNA-dependent RNA polymerase catalyzes the transcription of DNA into RNA using the four ribonucleoside triphosphates as substrates. This chain is DNA-directed RNA polymerase subunit alpha, found in Cyanidioschyzon merolae (strain NIES-3377 / 10D) (Unicellular red alga).